A 260-amino-acid chain; its full sequence is Hemin import ATP-binding protein HmuV (260 aa).

The ABC transporter domain occupies 2 to 239; that stretch reads IRAENITLIR…ETIARVYGIG (238 aa). ATP is bound at residue 34–41; it reads GPNGAGKS.

Belongs to the ABC transporter superfamily. Heme (hemin) importer (TC 3.A.1.14.5) family. The complex is composed of two ATP-binding proteins (HmuV), two transmembrane proteins (HmuU) and a solute-binding protein (HmuT).

The protein resides in the cell inner membrane. Its function is as follows. Part of the ABC transporter complex HmuTUV involved in hemin import. Responsible for energy coupling to the transport system. This is Hemin import ATP-binding protein HmuV from Agrobacterium fabrum (strain C58 / ATCC 33970) (Agrobacterium tumefaciens (strain C58)).